A 399-amino-acid chain; its full sequence is Argininosuccinate synthase (399 aa).

9–17 (AYSGGLDTS) provides a ligand contact to ATP. An L-citrulline-binding site is contributed by Y85. G115 is an ATP binding site. Residues T117, N121, and D122 each contribute to the L-aspartate site. L-citrulline is bound at residue N121. The L-citrulline site is built by R125, S173, E258, and Y270.

The protein belongs to the argininosuccinate synthase family. Type 1 subfamily. Homotetramer.

It is found in the cytoplasm. It catalyses the reaction L-citrulline + L-aspartate + ATP = 2-(N(omega)-L-arginino)succinate + AMP + diphosphate + H(+). It functions in the pathway amino-acid biosynthesis; L-arginine biosynthesis; L-arginine from L-ornithine and carbamoyl phosphate: step 2/3. This Streptococcus gordonii (strain Challis / ATCC 35105 / BCRC 15272 / CH1 / DL1 / V288) protein is Argininosuccinate synthase.